Reading from the N-terminus, the 117-residue chain is Immunoglobulin heavy variable 1-58 (117 aa).

Residues 1 to 19 (MDWIWRILFLVGAATGAHS) form the signal peptide. The interval 20-44 (QMQLVQSGPEVKKPGTSVKVSCKAS) is framework-1. One can recognise an Ig-like domain in the interval 20–117 (QMQLVQSGPE…EDTAVYYCAA (98 aa)). A disulfide bridge links Cys-41 with Cys-115. The segment at 45 to 52 (GFTFTSSA) is complementarity-determining-1. A framework-2 region spans residues 53–69 (VQWVRQARGQRLEWIGW). The interval 70–77 (IVVGSGNT) is complementarity-determining-2. The framework-3 stretch occupies residues 78–115 (NYAQKFQERVTITRDMSTSTAYMELSSLRSEDTAVYYC). Residues 116–117 (AA) are complementarity-determining-3.

In terms of assembly, immunoglobulins are composed of two identical heavy chains and two identical light chains; disulfide-linked.

It localises to the secreted. Its subcellular location is the cell membrane. V region of the variable domain of immunoglobulin heavy chains that participates in the antigen recognition. Immunoglobulins, also known as antibodies, are membrane-bound or secreted glycoproteins produced by B lymphocytes. In the recognition phase of humoral immunity, the membrane-bound immunoglobulins serve as receptors which, upon binding of a specific antigen, trigger the clonal expansion and differentiation of B lymphocytes into immunoglobulins-secreting plasma cells. Secreted immunoglobulins mediate the effector phase of humoral immunity, which results in the elimination of bound antigens. The antigen binding site is formed by the variable domain of one heavy chain, together with that of its associated light chain. Thus, each immunoglobulin has two antigen binding sites with remarkable affinity for a particular antigen. The variable domains are assembled by a process called V-(D)-J rearrangement and can then be subjected to somatic hypermutations which, after exposure to antigen and selection, allow affinity maturation for a particular antigen. This Homo sapiens (Human) protein is Immunoglobulin heavy variable 1-58.